A 192-amino-acid polypeptide reads, in one-letter code: Small ribosomal subunit protein uS4B (192 aa).

The S4 RNA-binding domain maps to 83–145; it reads RRLDNLVYRL…SRKIQTYASN (63 aa).

It belongs to the universal ribosomal protein uS4 family. In terms of assembly, part of the 30S ribosomal subunit. Contacts protein S5. The interaction surface between S4 and S5 is involved in control of translational fidelity.

In terms of biological role, one of the primary rRNA binding proteins, it binds directly to 16S rRNA where it nucleates assembly of the body of the 30S subunit. Its function is as follows. With S5 and S12 plays an important role in translational accuracy. The chain is Small ribosomal subunit protein uS4B (rpsD2) from Clostridium acetobutylicum (strain ATCC 824 / DSM 792 / JCM 1419 / IAM 19013 / LMG 5710 / NBRC 13948 / NRRL B-527 / VKM B-1787 / 2291 / W).